We begin with the raw amino-acid sequence, 209 residues long: Uracil phosphoribosyltransferase (209 aa).

5-phospho-alpha-D-ribose 1-diphosphate contacts are provided by residues R79, R104, and 131–139 (DPMLATGGS). Residues I194 and 199 to 201 (GDA) each bind uracil. 5-phospho-alpha-D-ribose 1-diphosphate is bound at residue D200.

It belongs to the UPRTase family. Mg(2+) is required as a cofactor.

The enzyme catalyses UMP + diphosphate = 5-phospho-alpha-D-ribose 1-diphosphate + uracil. Its pathway is pyrimidine metabolism; UMP biosynthesis via salvage pathway; UMP from uracil: step 1/1. With respect to regulation, allosterically activated by GTP. Catalyzes the conversion of uracil and 5-phospho-alpha-D-ribose 1-diphosphate (PRPP) to UMP and diphosphate. This Exiguobacterium sibiricum (strain DSM 17290 / CCUG 55495 / CIP 109462 / JCM 13490 / 255-15) protein is Uracil phosphoribosyltransferase.